Here is a 175-residue protein sequence, read N- to C-terminus: NADH-quinone oxidoreductase subunit B (175 aa).

[4Fe-4S] cluster-binding residues include Cys-49, Cys-50, Cys-115, and Cys-145.

This sequence belongs to the complex I 20 kDa subunit family. NDH-1 is composed of 14 different subunits. Subunits NuoB, C, D, E, F, and G constitute the peripheral sector of the complex. It depends on [4Fe-4S] cluster as a cofactor.

Its subcellular location is the cell membrane. It catalyses the reaction a quinone + NADH + 5 H(+)(in) = a quinol + NAD(+) + 4 H(+)(out). NDH-1 shuttles electrons from NADH, via FMN and iron-sulfur (Fe-S) centers, to quinones in the respiratory chain. The immediate electron acceptor for the enzyme in this species is believed to be a menaquinone. Couples the redox reaction to proton translocation (for every two electrons transferred, four hydrogen ions are translocated across the cytoplasmic membrane), and thus conserves the redox energy in a proton gradient. This chain is NADH-quinone oxidoreductase subunit B, found in Heliobacterium modesticaldum (strain ATCC 51547 / Ice1).